The primary structure comprises 208 residues: Small ribosomal subunit protein uS4 (208 aa).

The S4 RNA-binding domain maps to 98-161 (RRLDNVIYRL…KESPRIKELL (64 aa)).

Belongs to the universal ribosomal protein uS4 family. As to quaternary structure, part of the 30S ribosomal subunit. Contacts protein S5. The interaction surface between S4 and S5 is involved in control of translational fidelity.

In terms of biological role, one of the primary rRNA binding proteins, it binds directly to 16S rRNA where it nucleates assembly of the body of the 30S subunit. Functionally, with S5 and S12 plays an important role in translational accuracy. The sequence is that of Small ribosomal subunit protein uS4 from Pelotomaculum thermopropionicum (strain DSM 13744 / JCM 10971 / SI).